The primary structure comprises 434 residues: Citrate-proton symporter (434 aa).

The Cytoplasmic portion of the chain corresponds to 1 to 21 (MAQHTPATSRAGTFGAILRVT). A helical transmembrane segment spans residues 22–42 (SGNFLEQFDFFLFGFYATYIA). Residues 43 to 54 (RTFFPAESEFAS) lie on the Periplasmic side of the membrane. Residues 55–75 (LMLTFAVFGSGFLMRPVGAIV) traverse the membrane as a helical segment. At 76 to 87 (LGAYIDRIGRRK) the chain is on the cytoplasmic side. A helical transmembrane segment spans residues 88–108 (GLMVTLAIMGCGTLLIALVPG). Over 109–111 (YQT) the chain is Periplasmic. The chain crosses the membrane as a helical span at residues 112 to 132 (IGLAAPALVLLGRLLQGFSAG). Residues 133–164 (VELGGVSVYLSEIATPGNKGFYTSWQSASQQV) lie on the Cytoplasmic side of the membrane. A helical membrane pass occupies residues 165–185 (AIVVAALIGYSLNITLGHDAI). A topological domain (periplasmic) is located at residue S186. Residues 187–207 (EWGWRIPFFIGCMIIPLIFVL) form a helical membrane-spanning segment. Over 208 to 238 (RRSLQETEAFLQRKHRPDTREIFATIAKNWR) the chain is Cytoplasmic. The helical transmembrane segment at 239–259 (IITAGTLLVAMTTTTFYFITV) threads the bilayer. Residues 260-276 (YTPTYGRTVLNLSARDS) lie on the Periplasmic side of the membrane. The chain crosses the membrane as a helical span at residues 277-297 (LIVTMLVGVSNFIWLPIGGAI). At 298-304 (SDRIGRR) the chain is on the cytoplasmic side. The chain crosses the membrane as a helical span at residues 305–325 (AVLMGITLLALITTWPVMQWL). Residues 326 to 335 (TAAPDFTRMT) lie on the Periplasmic side of the membrane. Residues 336 to 356 (LVLLWFSFFFGMYNGAMVAAL) traverse the membrane as a helical segment. At 357–366 (TEVMPVYVRT) the chain is on the cytoplasmic side. A helical transmembrane segment spans residues 367-387 (VGFSLAFSLATAIFGGLTPAI). Topologically, residues 388–400 (STALVKLTGDKSS) are periplasmic. Residues 401 to 421 (PGWWLMCAALCGLAATAMLFV) traverse the membrane as a helical segment. Topologically, residues 422–434 (RLSRGYIAAENKA) are cytoplasmic.

This sequence belongs to the major facilitator superfamily. Metabolite:H+ Symporter (MHS) family (TC 2.A.1.6) family.

The protein resides in the cell inner membrane. Uptake of citrate across the boundary membrane with the concomitant transport of protons into the cell (symport system). This Salmonella typhi protein is Citrate-proton symporter (citA).